Reading from the N-terminus, the 663-residue chain is Syntabulin (663 aa).

Disordered stretches follow at residues 1–202 and 216–267; these read MGPL…PREK and VNIH…PEQY. A sufficient for interaction with KIF5B region spans residues 2-417; it reads GPLRESKKEH…DTMADGLSLE (416 aa). Ser50 is subject to Phosphoserine. A compositionally biased stretch (low complexity) spans 57–73; sequence FNPSSSGRSARTVSSNS. Residues 81-97 show a composition bias toward polar residues; it reads CPSSQSVSPVKTPSDAG. Phosphoserine is present on Ser107. Low complexity-rich tracts occupy residues 145 to 158, 188 to 198, and 221 to 241; these read EADF…GSIS, SSHKPGSSPSS, and SYAP…SDCS. The stretch at 271 to 353 forms a coiled coil; it reads LQQKEVTVRH…MRSSLADKDK (83 aa). The sufficient for interaction with STX1A stretch occupies residues 310–417; it reads REDWIEEECH…DTMADGLSLE (108 aa). Phosphoserine is present on residues Ser396 and Ser555. Residues 606–626 traverse the membrane as a helical segment; the sequence is SFLVDLLAVAAPVVPTVLWAF.

Interacts with STX1A and KIF5B. Isoform 3, isoform 4 and isoform 5 are expressed in HeLa cell line (at protein level). Isoform 3 is expressed in fetal and adult brain. Isoform 4 is expressed in numerous fetal tissues (brain, kidney, liver, lung, and thymus) and in adult brain, kidney, liver, lung, pancreas, colon, prostate, small intestine, testis and thymus. Isoform 5 is expressed in fetal brain, brain and small intestine.

The protein resides in the cytoplasm. Its subcellular location is the cytoskeleton. It localises to the cytoplasmic vesicle. The protein localises to the golgi apparatus membrane. Functionally, part of a kinesin motor-adapter complex that is critical for the anterograde axonal transport of active zone components and contributes to activity-dependent presynaptic assembly during neuronal development. The chain is Syntabulin (SYBU) from Homo sapiens (Human).